A 242-amino-acid polypeptide reads, in one-letter code: Peptidase E (242 aa).

Catalysis depends on charge relay system residues S123, D138, and H160.

The protein belongs to the peptidase S51 family.

Its subcellular location is the cytoplasm. It carries out the reaction Dipeptidase E catalyzes the hydrolysis of dipeptides Asp-|-Xaa. It does not act on peptides with N-terminal Glu, Asn or Gln, nor does it cleave isoaspartyl peptides.. Functionally, hydrolyzes dipeptides containing N-terminal aspartate residues. May play a role in allowing the cell to use peptide aspartate to spare carbon otherwise required for the synthesis of the aspartate family of amino acids. The polypeptide is Peptidase E (Nostoc sp. (strain PCC 7120 / SAG 25.82 / UTEX 2576)).